A 21-amino-acid polypeptide reads, in one-letter code: Major outer membrane protein P44 (21 aa).

In terms of assembly, monomer.

It localises to the cell outer membrane. In Mannheimia haemolytica (Pasteurella haemolytica), this protein is Major outer membrane protein P44.